The sequence spans 286 residues: 4-hydroxybenzoate octaprenyltransferase (286 aa).

7 helical membrane-spanning segments follow: residues 21–40 (GTLL…AGGM), 95–115 (ILFV…NGLV), 142–162 (FLGI…TGEV), 167–187 (WWLF…YAMV), 210–230 (QIIG…GWSA), 235–255 (LYGL…MLIF), and 266–286 (FLNN…DYLI).

It belongs to the UbiA prenyltransferase family. The cofactor is Mg(2+).

The protein resides in the cell inner membrane. The catalysed reaction is all-trans-octaprenyl diphosphate + 4-hydroxybenzoate = 4-hydroxy-3-(all-trans-octaprenyl)benzoate + diphosphate. It functions in the pathway cofactor biosynthesis; ubiquinone biosynthesis. Its function is as follows. Catalyzes the prenylation of para-hydroxybenzoate (PHB) with an all-trans polyprenyl group. Mediates the second step in the final reaction sequence of ubiquinone-8 (UQ-8) biosynthesis, which is the condensation of the polyisoprenoid side chain with PHB, generating the first membrane-bound Q intermediate 3-octaprenyl-4-hydroxybenzoate. In Shewanella baltica (strain OS223), this protein is 4-hydroxybenzoate octaprenyltransferase.